A 1185-amino-acid polypeptide reads, in one-letter code: Calmodulin-binding transcription activator homolog 1 (1185 aa).

The CG-1 DNA-binding region spans 72-200 (AVELFPCFKD…YLNVKTNNKI (129 aa)). Disordered regions lie at residues 252-277 (GVNL…RRNS) and 390-411 (KIRS…VTST). Residues 393-411 (SGSQESPMGPPSSSSVTST) show a composition bias toward low complexity. Residues 418–498 (EMTPSSSSLK…ISTASEFTYE (81 aa)) enclose the IPT/TIG domain. The ANK repeat unit spans residues 616 to 646 (DGSTPLHTACKNSASRIARLIISIDSSAIDV). The IQ domain maps to 957–984 (EAAMVIQRAYRVYRARSTTRRQEDIERR). The interval 1121–1185 (CPQTSGDQRN…KPPYGCGTLA (65 aa)) is disordered. Over residues 1128 to 1147 (QRNKRDSDGERKRDAHHDAP) the composition is skewed to basic and acidic residues.

It belongs to the CAMTA family. In terms of assembly, may interact with calmodulin. As to expression, expressed broadly in the nervous system.

It is found in the nucleus. Its function is as follows. Transcription factor. Positively modulates neuronal levels of the ubiquitous Ca2+ sensor calmodulin/cmd-1, probably by direct binding to the cmd-1 promoter, thereby regulating Ca2+ signaling, physiology, and behavior. The polypeptide is Calmodulin-binding transcription activator homolog 1 (Caenorhabditis elegans).